The sequence spans 445 residues: Exodeoxyribonuclease 7 large subunit (445 aa).

This sequence belongs to the XseA family. Heterooligomer composed of large and small subunits.

The protein localises to the cytoplasm. It carries out the reaction Exonucleolytic cleavage in either 5'- to 3'- or 3'- to 5'-direction to yield nucleoside 5'-phosphates.. Functionally, bidirectionally degrades single-stranded DNA into large acid-insoluble oligonucleotides, which are then degraded further into small acid-soluble oligonucleotides. In Geotalea daltonii (strain DSM 22248 / JCM 15807 / FRC-32) (Geobacter daltonii), this protein is Exodeoxyribonuclease 7 large subunit.